The sequence spans 616 residues: Leucine aminopeptidase (616 aa).

Residues 128–130 and 282–286 contribute to the substrate site; these read QCQ and GGMEN. Residue H309 coordinates Zn(2+). Residue E310 is the Proton acceptor of the active site. Positions 313 and 332 each coordinate Zn(2+). Catalysis depends on Y397, which acts as the Proton donor. 566–568 serves as a coordination point for substrate; sequence RMK.

Belongs to the peptidase M1 family. It depends on Zn(2+) as a cofactor.

It is found in the cytoplasm. The catalysed reaction is an epoxide + H2O = an ethanediol. Functionally, aminopeptidase that preferentially cleaves di- and tripeptides. Also has low epoxide hydrolase activity (in vitro). Can hydrolyze the epoxide leukotriene LTA(4) but it forms preferentially 5,6-dihydroxy-7,9,11,14-eicosatetraenoic acid rather than the cytokine leukotriene B(4) as the product compared to the homologous mammalian enzyme (in vitro). This Arabidopsis thaliana (Mouse-ear cress) protein is Leucine aminopeptidase (LKHA4).